The chain runs to 94 residues: Acylphosphatase (94 aa).

Residues 8–94 enclose the Acylphosphatase-like domain; it reads TVHVIVKGKV…EKRYKHFAQL (87 aa). Residues Arg-23 and Asn-41 contribute to the active site.

It belongs to the acylphosphatase family.

The enzyme catalyses an acyl phosphate + H2O = a carboxylate + phosphate + H(+). The polypeptide is Acylphosphatase (acyP) (Bordetella parapertussis (strain 12822 / ATCC BAA-587 / NCTC 13253)).